A 77-amino-acid chain; its full sequence is Small ribosomal subunit protein uS17 (77 aa).

It belongs to the universal ribosomal protein uS17 family. Part of the 30S ribosomal subunit.

Functionally, one of the primary rRNA binding proteins, it binds specifically to the 5'-end of 16S ribosomal RNA. The protein is Small ribosomal subunit protein uS17 of Rickettsia akari (strain Hartford).